A 523-amino-acid polypeptide reads, in one-letter code: ATP synthase subunit beta, mitochondrial (523 aa).

A mitochondrion-targeting transit peptide spans methionine 1–glutamine 19. Glycine 201–threonine 208 lines the ATP pocket.

The protein belongs to the ATPase alpha/beta chains family. As to quaternary structure, F-type ATPases have 2 components, CF(1) - the catalytic core - and CF(0) - the membrane proton channel. CF(1) has five subunits: alpha(3), beta(3), gamma(1), delta(1), epsilon(1). CF(0) has three main subunits: a, b and c.

Its subcellular location is the mitochondrion. It is found in the mitochondrion inner membrane. It carries out the reaction ATP + H2O + 4 H(+)(in) = ADP + phosphate + 5 H(+)(out). In terms of biological role, mitochondrial membrane ATP synthase (F(1)F(0) ATP synthase or Complex V) produces ATP from ADP in the presence of a proton gradient across the membrane which is generated by electron transport complexes of the respiratory chain. F-type ATPases consist of two structural domains, F(1) - containing the extramembraneous catalytic core, and F(0) - containing the membrane proton channel, linked together by a central stalk and a peripheral stalk. During catalysis, ATP synthesis in the catalytic domain of F(1) is coupled via a rotary mechanism of the central stalk subunits to proton translocation. Subunits alpha and beta form the catalytic core in F(1). Rotation of the central stalk against the surrounding alpha(3)beta(3) subunits leads to hydrolysis of ATP in three separate catalytic sites on the beta subunits. The protein is ATP synthase subunit beta, mitochondrial of Hemicentrotus pulcherrimus (Sea urchin).